Reading from the N-terminus, the 475-residue chain is UDP-N-acetylmuramate--L-alanine ligase (475 aa).

125 to 131 (GTHGKTT) provides a ligand contact to ATP.

The protein belongs to the MurCDEF family.

The protein localises to the cytoplasm. It carries out the reaction UDP-N-acetyl-alpha-D-muramate + L-alanine + ATP = UDP-N-acetyl-alpha-D-muramoyl-L-alanine + ADP + phosphate + H(+). Its pathway is cell wall biogenesis; peptidoglycan biosynthesis. Functionally, cell wall formation. The polypeptide is UDP-N-acetylmuramate--L-alanine ligase (Actinobacillus pleuropneumoniae serotype 7 (strain AP76)).